Here is a 225-residue protein sequence, read N- to C-terminus: Endonuclease V (225 aa).

Mg(2+) is bound by residues D43 and D110. Interaction with target DNA stretches follow at residues 139-141 (KSR) and 214-221 (HIYTQRLK).

The protein belongs to the endonuclease V family. Mg(2+) is required as a cofactor.

Its subcellular location is the cytoplasm. The enzyme catalyses Endonucleolytic cleavage at apurinic or apyrimidinic sites to products with a 5'-phosphate.. DNA repair enzyme involved in the repair of deaminated bases. Selectively cleaves double-stranded DNA at the second phosphodiester bond 3' to a deoxyinosine leaving behind the intact lesion on the nicked DNA. In vitro, can also cleave single-stranded substrates with inosine, double-stranded DNA with apurinic sites, or DNA sites with uracil or a mismatched base. When present in molar excess, two protein molecules can bind to the same DNA substrate and effect cleavage of both strands (in vitro). The sequence is that of Endonuclease V from Thermotoga maritima (strain ATCC 43589 / DSM 3109 / JCM 10099 / NBRC 100826 / MSB8).